Consider the following 457-residue polypeptide: uncharacterized protein (457 aa).

The region spanning Ala-10–Gln-69 is the TRAM domain. The [4Fe-4S] cluster site is built by Cys-82, Cys-88, Cys-91, and Cys-170. Gln-294, Tyr-323, Glu-344, and Asp-387 together coordinate S-adenosyl-L-methionine. Cys-414 (nucleophile) is an active-site residue.

It belongs to the class I-like SAM-binding methyltransferase superfamily. RNA M5U methyltransferase family.

This is an uncharacterized protein from Gloeobacter violaceus (strain ATCC 29082 / PCC 7421).